The primary structure comprises 333 residues: Ketol-acid reductoisomerase (NADP(+)) (333 aa).

Positions 2–182 (ANIYYDDSCD…GGGRAGILET (181 aa)) constitute a KARI N-terminal Rossmann domain. Residues 25–28 (YGSQ), Arg48, Ser51, Ser53, and 83–86 (DTIQ) contribute to the NADP(+) site. The active site involves His108. Position 134 (Gly134) interacts with NADP(+). The 149-residue stretch at 183 to 331 (SFREETETDL…TKLRSMMKWL (149 aa)) folds into the KARI C-terminal knotted domain. Residues Asp191, Glu195, Glu227, and Glu231 each coordinate Mg(2+). Ser252 is a binding site for substrate.

The protein belongs to the ketol-acid reductoisomerase family. Requires Mg(2+) as cofactor.

The catalysed reaction is (2R)-2,3-dihydroxy-3-methylbutanoate + NADP(+) = (2S)-2-acetolactate + NADPH + H(+). The enzyme catalyses (2R,3R)-2,3-dihydroxy-3-methylpentanoate + NADP(+) = (S)-2-ethyl-2-hydroxy-3-oxobutanoate + NADPH + H(+). Its pathway is amino-acid biosynthesis; L-isoleucine biosynthesis; L-isoleucine from 2-oxobutanoate: step 2/4. It functions in the pathway amino-acid biosynthesis; L-valine biosynthesis; L-valine from pyruvate: step 2/4. Its function is as follows. Involved in the biosynthesis of branched-chain amino acids (BCAA). Catalyzes an alkyl-migration followed by a ketol-acid reduction of (S)-2-acetolactate (S2AL) to yield (R)-2,3-dihydroxy-isovalerate. In the isomerase reaction, S2AL is rearranged via a Mg-dependent methyl migration to produce 3-hydroxy-3-methyl-2-ketobutyrate (HMKB). In the reductase reaction, this 2-ketoacid undergoes a metal-dependent reduction by NADPH to yield (R)-2,3-dihydroxy-isovalerate. The protein is Ketol-acid reductoisomerase (NADP(+)) of Leptospira biflexa serovar Patoc (strain Patoc 1 / Ames).